A 652-amino-acid polypeptide reads, in one-letter code: tRNA-guanine(15) transglycosylase (652 aa).

The Nucleophile role is filled by aspartate 88. Residues aspartate 123 and alanine 194 each contribute to the substrate site. Cysteine 280, cysteine 282, and cysteine 285 together coordinate Zn(2+). The PUA domain maps to 577-652 (KYRVVIDSEV…AAVSVRSGFK (76 aa)).

The protein belongs to the archaeosine tRNA-ribosyltransferase family. Zn(2+) is required as a cofactor.

The catalysed reaction is guanosine(15) in tRNA + 7-cyano-7-deazaguanine = 7-cyano-7-carbaguanosine(15) in tRNA + guanine. Its pathway is tRNA modification; archaeosine-tRNA biosynthesis. Exchanges the guanine residue with 7-cyano-7-deazaguanine (preQ0) at position 15 in the dihydrouridine loop (D-loop) of archaeal tRNAs. The chain is tRNA-guanine(15) transglycosylase from Methanococcus aeolicus (strain ATCC BAA-1280 / DSM 17508 / OCM 812 / Nankai-3).